Here is a 139-residue protein sequence, read N- to C-terminus: Protein COLD-REGULATED 15A, chloroplastic (139 aa).

Residues 1 to 40 (MAMSFSGAVLTGMASSFHSGAKQSSFGAVRVGQKTQFVVV) constitute a chloroplast transit peptide.

Belongs to the COR15 protein family. Forms homooligomers which interact with potential stromal substrates in the stroma of chloroplasts. Interacts with the galactose headgroup of the chloroplast lipid monogalactosyldiacylglycerol (MGDG).

It localises to the plastid. The protein localises to the chloroplast stroma. In terms of biological role, exhibits cryoprotective activity toward stromal substrates (e.g. LDH and rubisco) in chloroplasts and in protoplasts and confers freezing tolerance to plants in a CBF-dependent manner. Protectant against various stresses (e.g. cold, drought and heat stress) by preventing protein aggregation (e.g. LDH) and attenuating enzyme inactivation. Influences the intrinsic curvature of the inner membrane of the chloroplast envelope, and modulates the freeze-induced lamellar-to-hexagonal II phase transitions that occur in regions where the plasma membrane is brought into close apposition with the chloroplast envelope during freeze-induced osmotic contraction. Mediates a shift in the melting curves of phospholipids-containing membranes to lower temperatures. Involved in the regulation of leaf senescence by abscisic acid (ABA) in a VNI2-dependent manner. This Arabidopsis thaliana (Mouse-ear cress) protein is Protein COLD-REGULATED 15A, chloroplastic.